The chain runs to 252 residues: Adenosylcobinamide-GDP ribazoletransferase (252 aa).

Helical transmembrane passes span 4–24 (LLLL…LPYI), 35–55 (LVPM…GGMN), 65–85 (SALV…DGAM), 102–122 (VMAD…ILLL), 178–198 (LLPG…VNNH), 201–221 (LITV…AAWF), and 232–252 (TYGA…TILT).

It belongs to the CobS family. It depends on Mg(2+) as a cofactor.

Its subcellular location is the cell inner membrane. The enzyme catalyses alpha-ribazole + adenosylcob(III)inamide-GDP = adenosylcob(III)alamin + GMP + H(+). The catalysed reaction is alpha-ribazole 5'-phosphate + adenosylcob(III)inamide-GDP = adenosylcob(III)alamin 5'-phosphate + GMP + H(+). It participates in cofactor biosynthesis; adenosylcobalamin biosynthesis; adenosylcobalamin from cob(II)yrinate a,c-diamide: step 7/7. In terms of biological role, joins adenosylcobinamide-GDP and alpha-ribazole to generate adenosylcobalamin (Ado-cobalamin). Also synthesizes adenosylcobalamin 5'-phosphate from adenosylcobinamide-GDP and alpha-ribazole 5'-phosphate. The sequence is that of Adenosylcobinamide-GDP ribazoletransferase from Trichormus variabilis (strain ATCC 29413 / PCC 7937) (Anabaena variabilis).